A 176-amino-acid polypeptide reads, in one-letter code: CASP-like protein 5A1 (176 aa).

Over 1-45 (MDASHPAVYPVGVPPTAVDPPPRVRMKDYEGMPSTLGGLVLRSGQ) the chain is Cytoplasmic. Residues 46–66 (FACAVTALSIMISIPDFSSVT) form a helical membrane-spanning segment. Ala67 is a topological domain (extracellular). The helical transmembrane segment at 68 to 88 (FCYLVAAMALQLLWSVSLAVV) threads the bilayer. At 89-102 (DGYALLLRRTLHNP) the chain is on the cytoplasmic side. A helical membrane pass occupies residues 103-123 (VLLSLLVIGDWVTSTLSLAAA). Residues 124 to 151 (CSSAGITVLIDSDLAQCAHNHCGRYEAA) are Extracellular-facing. A helical membrane pass occupies residues 152 to 172 (VAMAFLTWFLVSLSFFFSFWL). Topologically, residues 173-176 (LATR) are cytoplasmic.

The protein belongs to the Casparian strip membrane proteins (CASP) family. As to quaternary structure, homodimer and heterodimers.

Its subcellular location is the cell membrane. The sequence is that of CASP-like protein 5A1 from Selaginella moellendorffii (Spikemoss).